A 490-amino-acid polypeptide reads, in one-letter code: Protein nucleotidyltransferase YdiU (490 aa).

ATP is bound by residues Gly94, Gly96, Arg97, Lys117, Asp129, Gly130, Arg180, and Arg187. Asp256 (proton acceptor) is an active-site residue. 2 residues coordinate Mg(2+): Asn257 and Asp266. Residue Asp266 participates in ATP binding.

It belongs to the SELO family. Mg(2+) serves as cofactor. It depends on Mn(2+) as a cofactor.

The catalysed reaction is L-seryl-[protein] + ATP = 3-O-(5'-adenylyl)-L-seryl-[protein] + diphosphate. It carries out the reaction L-threonyl-[protein] + ATP = 3-O-(5'-adenylyl)-L-threonyl-[protein] + diphosphate. The enzyme catalyses L-tyrosyl-[protein] + ATP = O-(5'-adenylyl)-L-tyrosyl-[protein] + diphosphate. It catalyses the reaction L-histidyl-[protein] + UTP = N(tele)-(5'-uridylyl)-L-histidyl-[protein] + diphosphate. The catalysed reaction is L-seryl-[protein] + UTP = O-(5'-uridylyl)-L-seryl-[protein] + diphosphate. It carries out the reaction L-tyrosyl-[protein] + UTP = O-(5'-uridylyl)-L-tyrosyl-[protein] + diphosphate. In terms of biological role, nucleotidyltransferase involved in the post-translational modification of proteins. It can catalyze the addition of adenosine monophosphate (AMP) or uridine monophosphate (UMP) to a protein, resulting in modifications known as AMPylation and UMPylation. In Clostridium perfringens (strain ATCC 13124 / DSM 756 / JCM 1290 / NCIMB 6125 / NCTC 8237 / Type A), this protein is Protein nucleotidyltransferase YdiU.